The following is a 231-amino-acid chain: NADH-ubiquinone oxidoreductase chain 4 (231 aa).

6 helical membrane passes run 1 to 21, 34 to 54, 63 to 85, 89 to 111, 118 to 138, and 156 to 176; these read PIAGSMVLAAILLKLGGYGII, MFLPLVVLALWGAVLANLTCL, IAYSSISHMGLVAAAIIIQTPWG, GMTLMIAHGFTSSALFCLANTTY, ILILTRGFHNILPMATTWWLL, and LLIMSALFNWCPTTIIMLGLS.

Belongs to the complex I subunit 4 family.

The protein resides in the mitochondrion membrane. The catalysed reaction is a ubiquinone + NADH + 5 H(+)(in) = a ubiquinol + NAD(+) + 4 H(+)(out). Functionally, core subunit of the mitochondrial membrane respiratory chain NADH dehydrogenase (Complex I) that is believed to belong to the minimal assembly required for catalysis. Complex I functions in the transfer of electrons from NADH to the respiratory chain. The immediate electron acceptor for the enzyme is believed to be ubiquinone. This is NADH-ubiquinone oxidoreductase chain 4 (MT-ND4) from Calloselasma rhodostoma (Malayan pit viper).